Here is a 262-residue protein sequence, read N- to C-terminus: 26 kDa secreted antigen (262 aa).

A signal peptide spans 1-21 (MSVVHKACLIALLFVSSGVAQ). ShKT domains lie at 23–57 (CMDS…CNTC) and 59–93 (CRDE…CGLC). Intrachain disulfides connect Cys-23-Cys-57, Cys-30-Cys-50, Cys-37-Cys-54, Cys-59-Cys-93, Cys-66-Cys-86, and Cys-73-Cys-90.

This sequence belongs to the phosphatidylethanolamine-binding protein family.

It is found in the secreted. Its function is as follows. Binds phosphatidylethanolamine. The sequence is that of 26 kDa secreted antigen (TES-26) from Toxocara canis (Canine roundworm).